A 415-amino-acid chain; its full sequence is Probable glucan 1,3-beta-glucosidase A (415 aa).

Residues 1 to 22 form the signal peptide; sequence MLSRLSQTALVALSLMTVLTEA. Glu210 acts as the Proton donor in catalysis. 2 disulfide bridges follow: Cys290–Cys414 and Cys315–Cys341. Residue Glu307 is the Nucleophile of the active site. Residues 335–359 form a disordered region; that stretch reads SPRYGDCGNKRQGSSSGLSEQERSD.

Belongs to the glycosyl hydrolase 5 (cellulase A) family. In terms of assembly, monomer. Requires Mn(2+) as cofactor.

It is found in the secreted. The enzyme catalyses Successive hydrolysis of beta-D-glucose units from the non-reducing ends of (1-&gt;3)-beta-D-glucans, releasing alpha-glucose.. In terms of biological role, beta-glucanases participate in the metabolism of beta-glucan, the main structural component of the cell wall. It could also function biosynthetically as a transglycosylase. In Aspergillus clavatus (strain ATCC 1007 / CBS 513.65 / DSM 816 / NCTC 3887 / NRRL 1 / QM 1276 / 107), this protein is Probable glucan 1,3-beta-glucosidase A (exgA).